A 376-amino-acid chain; its full sequence is Erythronate-4-phosphate dehydrogenase (376 aa).

The substrate site is built by serine 45 and threonine 67. Aspartate 147 is a binding site for NAD(+). The active site involves arginine 209. Aspartate 233 is an NAD(+) binding site. Glutamate 238 is a catalytic residue. Histidine 255 (proton donor) is an active-site residue. An NAD(+)-binding site is contributed by glycine 258. Tyrosine 259 contributes to the substrate binding site.

The protein belongs to the D-isomer specific 2-hydroxyacid dehydrogenase family. PdxB subfamily. As to quaternary structure, homodimer.

The protein resides in the cytoplasm. It carries out the reaction 4-phospho-D-erythronate + NAD(+) = (R)-3-hydroxy-2-oxo-4-phosphooxybutanoate + NADH + H(+). It participates in cofactor biosynthesis; pyridoxine 5'-phosphate biosynthesis; pyridoxine 5'-phosphate from D-erythrose 4-phosphate: step 2/5. In terms of biological role, catalyzes the oxidation of erythronate-4-phosphate to 3-hydroxy-2-oxo-4-phosphonooxybutanoate. The polypeptide is Erythronate-4-phosphate dehydrogenase (Shewanella oneidensis (strain ATCC 700550 / JCM 31522 / CIP 106686 / LMG 19005 / NCIMB 14063 / MR-1)).